We begin with the raw amino-acid sequence, 87 residues long: Prolactin-releasing peptide (87 aa).

The N-terminal stretch at 1–22 is a signal peptide; it reads MKVLRAWLLCLLMLGLALRGAA. F53 is modified (phenylalanine amide). Residues 58 to 87 constitute a propeptide that is removed on maturation; that stretch reads ATLGDVPKPGLRPRLTCFPLEGGAMSSQDG.

As to expression, medulla oblongata and hypothalamus.

Its subcellular location is the secreted. Its function is as follows. Stimulates prolactin (PRL) release and regulates the expression of prolactin through its receptor GPR10. May stimulate lactotrophs directly to secrete PRL. The polypeptide is Prolactin-releasing peptide (PRLH) (Homo sapiens (Human)).